The chain runs to 191 residues: NADH-quinone oxidoreductase subunit B (191 aa).

4 residues coordinate [4Fe-4S] cluster: C70, C71, C135, and C165.

It belongs to the complex I 20 kDa subunit family. In terms of assembly, NDH-1 is composed of 14 different subunits. Subunits NuoB, C, D, E, F, and G constitute the peripheral sector of the complex. [4Fe-4S] cluster serves as cofactor.

The protein resides in the cell inner membrane. It carries out the reaction a quinone + NADH + 5 H(+)(in) = a quinol + NAD(+) + 4 H(+)(out). Its function is as follows. NDH-1 shuttles electrons from NADH, via FMN and iron-sulfur (Fe-S) centers, to quinones in the respiratory chain. The immediate electron acceptor for the enzyme in this species is believed to be ubiquinone. Couples the redox reaction to proton translocation (for every two electrons transferred, four hydrogen ions are translocated across the cytoplasmic membrane), and thus conserves the redox energy in a proton gradient. This is NADH-quinone oxidoreductase subunit B from Parvibaculum lavamentivorans (strain DS-1 / DSM 13023 / NCIMB 13966).